The chain runs to 222 residues: MILTIDNILTSEELTELTDILSQGNFVDGQTTAGWHAKLVKQNSQLDKTAPEVKSLEALVINALQRNLLFKLAIHPKHIHSLRFSRYEPKMHYGSHTDNALMGGQQFFRSDVSFTLFLSSPESYEGGELIIEKPEGDLSYKLNPGSIVLYPSTFLHRVETVKTGTRLVVVGWVHSLIRDTAQREILFDIDTVRRSIFAKDGKSVEFDLLAKTHANLLRQWAD.

The Fe2OG dioxygenase domain maps to 78 to 175 (HIHSLRFSRY…RLVVVGWVHS (98 aa)). 3 residues coordinate Fe cation: His-96, Asp-98, and His-156. Residue Arg-166 participates in 2-oxoglutarate binding.

Fe(2+) serves as cofactor. Requires L-ascorbate as cofactor.

This is PKHD-type hydroxylase cce_3668 from Crocosphaera subtropica (strain ATCC 51142 / BH68) (Cyanothece sp. (strain ATCC 51142)).